A 388-amino-acid chain; its full sequence is Processive diacylglycerol beta-glucosyltransferase (388 aa).

Belongs to the glycosyltransferase 28 family. UgtP subfamily.

The protein resides in the cell membrane. The enzyme catalyses a 1,2-diacyl-3-O-(beta-D-glucopyranosyl)-sn-glycerol + UDP-alpha-D-glucose = a 1,2-diacyl-3-O-(beta-D-Glc-(1-&gt;6)-beta-D-Glc)-sn-glycerol + UDP + H(+). The catalysed reaction is a 1,2-diacyl-3-O-(beta-D-Glc-(1-&gt;6)-beta-D-Glc)-sn-glycerol + UDP-alpha-D-glucose = a 1,2-diacyl-3-O-(beta-D-Glc-(1-&gt;6)-beta-D-Glc-(1-&gt;6)-beta-D-Glc)-sn-glycerol + UDP + H(+). It carries out the reaction a 1,2-diacyl-sn-glycerol + UDP-alpha-D-glucose = a 1,2-diacyl-3-O-(beta-D-glucopyranosyl)-sn-glycerol + UDP + H(+). Its pathway is glycolipid metabolism; diglucosyl-diacylglycerol biosynthesis. Its function is as follows. Processive glucosyltransferase involved in the biosynthesis of both the bilayer- and non-bilayer-forming membrane glucolipids. Is able to successively transfer up to three glucosyl residues to diacylglycerol (DAG), thereby catalyzing the formation of beta-monoglucosyl-DAG (3-O-(beta-D-glucopyranosyl)-1,2-diacyl-sn-glycerol), beta-diglucosyl-DAG (3-O-(beta-D-glucopyranosyl-beta-(1-&gt;6)-D-glucopyranosyl)-1,2-diacyl-sn-glycerol) and beta-triglucosyl-DAG (3-O-(beta-D-glucopyranosyl-beta-(1-&gt;6)-D-glucopyranosyl-beta-(1-&gt;6)-D-glucopyranosyl)-1,2-diacyl-sn-glycerol). Beta-diglucosyl-DAG is the predominant glycolipid found in Bacillales and is also used as a membrane anchor for lipoteichoic acid (LTA). The protein is Processive diacylglycerol beta-glucosyltransferase of Bacillus cereus (strain G9842).